Reading from the N-terminus, the 385-residue chain is V-type proton ATPase subunit C (385 aa).

This sequence belongs to the V-ATPase C subunit family. In terms of assembly, V-ATPase is a heteromultimeric enzyme made up of two complexes: the ATP-hydrolytic V1 complex and the proton translocation V0 complex. The V1 complex consists of three catalytic AB heterodimers that form a heterohexamer, three peripheral stalks each consisting of EG heterodimers, one central rotor including subunits D and F, and the regulatory subunits C and H. The proton translocation complex V0 consists of the proton transport subunit a, a ring of proteolipid subunits c9c'', rotary subunit d, subunits e and f, and the accessory subunits vah-19/Ac45 and vah-20/PRR. Interacts with V-type proton ATPase subunits a1 unc-32, a2 vha-5 and a3 vha-6.

The protein resides in the cytoplasm. Its subcellular location is the membrane. Subunit of the V1 complex of vacuolar(H+)-ATPase (V-ATPase), a multisubunit enzyme composed of a peripheral complex (V1) that hydrolyzes ATP and a membrane integral complex (V0) that translocates protons. V-ATPase is responsible for acidifying and maintaining the pH of intracellular compartments and in some cell types, is targeted to the plasma membrane, where it is responsible for acidifying the extracellular environment. Subunit C is necessary for the assembly of the catalytic sector of the enzyme and is likely to have a specific function in its catalytic activity. Has roles in embryogenesis and ovulation. The polypeptide is V-type proton ATPase subunit C (Caenorhabditis briggsae).